A 241-amino-acid chain; its full sequence is Ras-like protein 1 (241 aa).

GTP contacts are provided by residues Gly-17 to Ala-22, Val-33 to Thr-39, Ala-63 to Gly-64, Asn-138 to Asp-141, and Ser-168 to Lys-170. The Effector region signature appears at Tyr-36–Tyr-44. The disordered stretch occupies residues Arg-190–Leu-241. Residues Gln-191–Lys-205 are compositionally biased toward polar residues. Basic and acidic residues predominate over residues Asp-219–Lys-230. Cys-238 is modified (cysteine methyl ester). A lipid anchor (S-farnesyl cysteine) is attached at Cys-238. Residues Val-239 to Leu-241 constitute a propeptide, removed in mature form.

Belongs to the small GTPase superfamily. Ras family. Interacts with farnesyltransferase beta subunit RAM1.

The protein resides in the cell membrane. With respect to regulation, alternates between an inactive form bound to GDP and an active form bound to GTP. Activated by a guanine nucleotide-exchange factor (GEF) and inactivated by a GTPase-activating protein (GAP). Modulates the activity of the adenylate cyclase catalytic subunit and therefore affects the biosynthesis of cyclic-AMP. Plays a role in both surface attachment and surface recognition of appressoria, a highly specialized infection structure for plant penetration. Regulates appressorium formation by coordinated regulation of cAMP signaling and Pmk1 MAPK pathways. The polypeptide is Ras-like protein 1 (Pyricularia oryzae (strain 70-15 / ATCC MYA-4617 / FGSC 8958) (Rice blast fungus)).